Here is a 156-residue protein sequence, read N- to C-terminus: Small ribosomal subunit protein uS7 (156 aa).

Belongs to the universal ribosomal protein uS7 family. As to quaternary structure, part of the 30S ribosomal subunit. Contacts proteins S9 and S11.

In terms of biological role, one of the primary rRNA binding proteins, it binds directly to 16S rRNA where it nucleates assembly of the head domain of the 30S subunit. Is located at the subunit interface close to the decoding center, probably blocks exit of the E-site tRNA. This is Small ribosomal subunit protein uS7 from Aliivibrio fischeri (strain MJ11) (Vibrio fischeri).